Reading from the N-terminus, the 249-residue chain is Metallo-beta-lactamase type 2 (249 aa).

Residues methionine 1–glycine 22 form the signal peptide. The Zn(2+) site is built by histidine 98, histidine 100, aspartate 102, histidine 161, and cysteine 180. Lysine 183 provides a ligand contact to substrate. Histidine 222 contacts Zn(2+).

This sequence belongs to the metallo-beta-lactamase superfamily. Class-B beta-lactamase family. In terms of assembly, monomer. The cofactor is Zn(2+).

The protein resides in the periplasm. It catalyses the reaction a beta-lactam + H2O = a substituted beta-amino acid. Its function is as follows. Confers resistance to the different beta-lactams antibiotics (penicillin, cephalosporin and carbapenem) via the hydrolysis of the beta-lactam ring. In Elizabethkingia meningoseptica (Chryseobacterium meningosepticum), this protein is Metallo-beta-lactamase type 2 (blaB4).